A 122-amino-acid polypeptide reads, in one-letter code: UPF0382 membrane protein SAB0533 (122 aa).

4 helical membrane-spanning segments follow: residues 3–23, 46–66, 69–89, and 98–118; these read LFIILGALNAMMAVGTGAFGA, MYHGLALLIIGVISGTTSINV, AGWLIFAGIIFFSGSLYILVL, and ITPIGGVLFIIGWIMLIIATF.

The protein belongs to the UPF0382 family.

The protein resides in the cell membrane. The polypeptide is UPF0382 membrane protein SAB0533 (Staphylococcus aureus (strain bovine RF122 / ET3-1)).